The following is a 211-amino-acid chain: Vascular-related unknown protein 1 (211 aa).

A compositionally biased stretch (polar residues) spans 1–12 (MMDTFSCNSYEQ). The interval 1 to 40 (MMDTFSCNSYEQNHPHDDDIDIDAHDHDSHGGDHQEESGW) is disordered. Positions 13 to 37 (NHPHDDDIDIDAHDHDSHGGDHQEE) are enriched in basic and acidic residues.

As to expression, expressed in vascular tissues of cotyledons, rosette leaves, sepals, petals, anther filaments. Expressed in roots, inflorescence stems and developing seeds.

The protein resides in the cytoplasm. It localises to the nucleus. Involved in the regulation of xylem development and growth. May regulate secondary wall formation during vascular development by modulation of brassinosteroid, gibberellin and auxin hormone signaling pathways. This Arabidopsis thaliana (Mouse-ear cress) protein is Vascular-related unknown protein 1.